A 206-amino-acid polypeptide reads, in one-letter code: Sclerostin domain-containing protein 1 (206 aa).

A signal peptide spans 1–23 (MLPPAIHFYLLPLACILMKSCLA). Asn47 carries N-linked (GlcNAc...) asparagine glycosylation. Disulfide bonds link Cys75–Cys133, Cys89–Cys147, Cys100–Cys163, and Cys104–Cys165. The region spanning 75–170 (CRELRSTKYI…TACKCKRYTR (96 aa)) is the CTCK domain. N-linked (GlcNAc...) asparagine glycosylation occurs at Asn173. A disordered region spans residues 176-206 (SHNFESMSPAKPVQHHRERKRASKSSKHSMS). The span at 188–206 (VQHHRERKRASKSSKHSMS) shows a compositional bias: basic residues.

This sequence belongs to the sclerostin family. As to quaternary structure, interacts with BMP2, BMP4, BMP6 and BMP7 with high affinity.

Its subcellular location is the secreted. Its function is as follows. Directly antagonizes activity of BMP2, BMP4, BMP6 and BMP7 in a dose-dependent manner. Enhances Wnt signaling and inhibits TGF-beta signaling. May be involved in the onset of endometrial receptivity for implantation/sensitization for the decidual cell reaction. This Pongo abelii (Sumatran orangutan) protein is Sclerostin domain-containing protein 1 (SOSTDC1).